A 142-amino-acid chain; its full sequence is Large ribosomal subunit protein uL13 (142 aa).

This sequence belongs to the universal ribosomal protein uL13 family. In terms of assembly, part of the 50S ribosomal subunit.

This protein is one of the early assembly proteins of the 50S ribosomal subunit, although it is not seen to bind rRNA by itself. It is important during the early stages of 50S assembly. This Histophilus somni (strain 2336) (Haemophilus somnus) protein is Large ribosomal subunit protein uL13.